The primary structure comprises 127 residues: MARVKRSVNAKKKRREVLKSAKGYRGQRSRLYRKAKEQMLHSKTYEFRDRKARKNEFRKLWIQRINAGARQNGMTYNRLIQGLRLAEIEVDRKNLAELAVNDFDAFTALCEAAKAALPEDVNAPAAS.

It belongs to the bacterial ribosomal protein bL20 family.

Its function is as follows. Binds directly to 23S ribosomal RNA and is necessary for the in vitro assembly process of the 50S ribosomal subunit. It is not involved in the protein synthesizing functions of that subunit. This Corynebacterium jeikeium (strain K411) protein is Large ribosomal subunit protein bL20.